Consider the following 296-residue polypeptide: MKDKLVKAIAKDGQVRIIGAITTELVNEGVKLHNCAPTAAAALGRMLTAGALMGTTLKSEKDTLTLQIHGGGIAKGVVVTSYADGHVKGYIGNPTADIEPNSKGKLDVSGIIGKNGNLLVIRDMGLKEPYIGQVPIYTGEIGEDLAYYYTVSEQTPSAVGLGVLVDKDLSIKSAGGFIIQMMPGADEMLADLISYRLEEIPSITEMISKGMTIEEILEYIFEDMDLNILESIVPEYRCDCSREKVERALASIGQKDLKEIYDEGKEEELKCHFCNKAYTFSHDEIGDILESYYNEK.

Cystine bridges form between Cys-238–Cys-240 and Cys-271–Cys-274.

Belongs to the HSP33 family. Post-translationally, under oxidizing conditions two disulfide bonds are formed involving the reactive cysteines. Under reducing conditions zinc is bound to the reactive cysteines and the protein is inactive.

It localises to the cytoplasm. Functionally, redox regulated molecular chaperone. Protects both thermally unfolding and oxidatively damaged proteins from irreversible aggregation. Plays an important role in the bacterial defense system toward oxidative stress. The sequence is that of 33 kDa chaperonin from Clostridium botulinum (strain 657 / Type Ba4).